The sequence spans 161 residues: Lipoprotein signal peptidase (161 aa).

A run of 3 helical transmembrane segments spans residues Ile6–Val26, Gly67–Lys87, and Val90–Leu110. Active-site residues include Asp121 and Asp139. A helical transmembrane segment spans residues Ala134 to Ile154.

It belongs to the peptidase A8 family.

The protein localises to the cell inner membrane. It catalyses the reaction Release of signal peptides from bacterial membrane prolipoproteins. Hydrolyzes -Xaa-Yaa-Zaa-|-(S,diacylglyceryl)Cys-, in which Xaa is hydrophobic (preferably Leu), and Yaa (Ala or Ser) and Zaa (Gly or Ala) have small, neutral side chains.. Its pathway is protein modification; lipoprotein biosynthesis (signal peptide cleavage). This protein specifically catalyzes the removal of signal peptides from prolipoproteins. The sequence is that of Lipoprotein signal peptidase from Syntrophus aciditrophicus (strain SB).